The sequence spans 57 residues: COP9 signalosome complex subunit 9 (57 aa).

This sequence belongs to the CSN9 family. As to quaternary structure, component of the CSN complex, probably composed of cops1, cops2, cops3, cops4, cops5, cops6, cops7, cops8 and cops9.

Its subcellular location is the nucleus. The protein localises to the cytoplasm. The protein resides in the nucleoplasm. In terms of biological role, component of the COP9 signalosome complex (CSN), a complex involved in various cellular and developmental processes. The CSN complex is an essential regulator of the ubiquitin (Ubl) conjugation pathway by mediating the deneddylation of the cullin subunits of SCF-type E3 ligase complexes, leading to decrease the Ubl ligase activity. May play a role in cell proliferation. The protein is COP9 signalosome complex subunit 9 of Xenopus laevis (African clawed frog).